The primary structure comprises 891 residues: Echinoderm microtubule-associated protein-like elp-1 (891 aa).

The segment covering 77 to 88 has biased composition (polar residues); the sequence is DQSRSPTCSGYS. Positions 77–167 are disordered; sequence DQSRSPTCSG…ARGSPMRKWV (91 aa). A compositionally biased stretch (low complexity) spans 104 to 117; the sequence is SPSHAPPRSSHANS. Positions 118-131 are enriched in polar residues; the sequence is KSLYINGMNNNSEE. 9 WD repeats span residues 330-401, 404-447, 499-537, 541-579, 626-664, 708-747, 753-792, 816-853, and 859-890; these read GHTC…TLMV, GFEK…REGE, DKPK…TTKQ, VHPG…RTRR, GDPG…VEFS, EGTA…NLLV, HIPA…CDGT, SSNG…VTAG, and GHGR…EWCL.

Belongs to the WD repeat EMAP family.

The protein resides in the cytoplasm. It localises to the cytoskeleton. In terms of biological role, may modify the assembly dynamics of microtubules, such that microtubules are slightly longer, but more dynamic. This Caenorhabditis elegans protein is Echinoderm microtubule-associated protein-like elp-1 (elp-1).